The sequence spans 139 residues: MEAVVFVFSLLDCCALIFLSVYFIITLSDLECDYINARSCCSKLNKWVIPELVGHTLVTVLMLISLHWFIFLLNLPVAAWNIYRYIMVPSGNMGVFDPTEIHNRGQLKSHMKEAMIKLGFHLLCFFMYLYSMILALIND.

3 helical membrane passes run 5-25 (VFVF…YFII), 57-77 (LVTV…NLPV), and 118-138 (LGFH…ALIN).

This sequence belongs to the cornichon family. As to quaternary structure, interacts with Sec23/24 complex components SEC24B and SEC24D. Interacts with CCR5. Interacts with ADRB2 in the early secretory pathway.

The protein localises to the membrane. Its subcellular location is the endoplasmic reticulum. The protein resides in the endoplasmic reticulum-Golgi intermediate compartment. Its function is as follows. Involved in G protein-coupled receptors (GPCRs) trafficking from the endoplasmic reticulum to the cell surface; it promotes the exit of GPCRs from the early secretory pathway, likely through interaction with the COPII machinery. This is Protein cornichon homolog 4 (CNIH4) from Bos taurus (Bovine).